The sequence spans 297 residues: MAFQECVIEVAQDQAEAWSDALFDLCALSVSVEDADADTPDEQPLFGEPGLEPTKLAWNRSRVVALFGDDTDPALAVAAASNALGIDPVPAYALREVEDQDWVRLTQSQFEPIRIGERIWVVPSWHDAPEPDAVVLELDPGLAFGTGSHPTTRLCMQWLEQNLKAGETVLDYGCGSGILAIVAKKLGAGDTLGIDIDPNAVEASRYNAERNQVQADFALPESVSEATYDLVVANILSNPLKLMAAMLSARVRAGGRLILSGVLERQAEEVAAAYAPWLPLTVWRSEEGWVCLHGTRP.

S-adenosyl-L-methionine contacts are provided by Thr-152, Gly-173, Asp-195, and Asn-234.

The protein belongs to the methyltransferase superfamily. PrmA family.

It localises to the cytoplasm. It catalyses the reaction L-lysyl-[protein] + 3 S-adenosyl-L-methionine = N(6),N(6),N(6)-trimethyl-L-lysyl-[protein] + 3 S-adenosyl-L-homocysteine + 3 H(+). In terms of biological role, methylates ribosomal protein L11. This Cupriavidus pinatubonensis (strain JMP 134 / LMG 1197) (Cupriavidus necator (strain JMP 134)) protein is Ribosomal protein L11 methyltransferase.